The chain runs to 160 residues: Cytochrome b6-f complex subunit 4 (160 aa).

The next 3 membrane-spanning stretches (helical) occupy residues 36–56 (LLYI…GLAV), 95–115 (LLGV…PFLE), and 131–151 (TVFL…TLPI).

This sequence belongs to the cytochrome b family. PetD subfamily. In terms of assembly, the 4 large subunits of the cytochrome b6-f complex are cytochrome b6, subunit IV (17 kDa polypeptide, petD), cytochrome f and the Rieske protein, while the 4 small subunits are petG, petL, petM and petN. The complex functions as a dimer.

The protein localises to the plastid. It is found in the chloroplast thylakoid membrane. In terms of biological role, component of the cytochrome b6-f complex, which mediates electron transfer between photosystem II (PSII) and photosystem I (PSI), cyclic electron flow around PSI, and state transitions. This is Cytochrome b6-f complex subunit 4 from Pisum sativum (Garden pea).